A 534-amino-acid polypeptide reads, in one-letter code: Protein BFR2 (534 aa).

The tract at residues 27–148 (ENASLFQHNE…ETEEAQQKRH (122 aa)) is disordered. Phosphoserine occurs at positions 41 and 44. Over residues 52-77 (EETKKAHYLEVEKSKLRAEKGLELND) the composition is skewed to basic and acidic residues. A coiled-coil region spans residues 86–161 (SRQALYEEVS…KLIQQETKQA (76 aa)). Composition is skewed to acidic residues over residues 93–114 (EVSE…EEDA) and 121–142 (SEDE…ETEE). Serine 366, serine 372, and serine 379 each carry phosphoserine.

This sequence belongs to the AATF family.

The protein resides in the nucleus. It localises to the nucleolus. Functionally, involved in endoplasmic reticulum to Golgi transport. Involved in a protein-transport step blocked by brefeldin A, which disrupts the Golgi apparatus and its incoming protein flux. May also be involved for mass growth or cell proliferation. The protein is Protein BFR2 (BFR2) of Saccharomyces cerevisiae (strain ATCC 204508 / S288c) (Baker's yeast).